Consider the following 153-residue polypeptide: DNA gyrase inhibitor (153 aa).

The protein belongs to the DNA gyrase inhibitor family. Interacts with DNA gyrase.

Its subcellular location is the cytoplasm. In terms of biological role, inhibits the supercoiling activity of DNA gyrase. Acts by inhibiting DNA gyrase at an early step, prior to (or at the step of) binding of DNA by the gyrase. It protects cells against toxins that target DNA gyrase, by inhibiting activity of these toxins and reducing the formation of lethal double-strand breaks in the cell. In Pantoea sp. (strain At-9b), this protein is DNA gyrase inhibitor.